Here is a 274-residue protein sequence, read N- to C-terminus: Large ribosomal subunit protein uL2cz/uL2cy (274 aa).

The tract at residues Asn224–Ala252 is disordered.

Belongs to the universal ribosomal protein uL2 family. Part of the 50S ribosomal subunit.

It is found in the plastid. It localises to the chloroplast. This chain is Large ribosomal subunit protein uL2cz/uL2cy (rpl2-A), found in Capsella bursa-pastoris (Shepherd's purse).